The following is a 322-amino-acid chain: Extracellular metalloprotease AFUB_008060 (322 aa).

Residues 1 to 22 form the signal peptide; the sequence is MLPFNSCVYVLLIISLMSNCRA. Residues asparagine 123 and asparagine 197 are each glycosylated (N-linked (GlcNAc...) asparagine). Histidine 233 lines the Zn(2+) pocket. Glutamate 234 is a catalytic residue. A Zn(2+)-binding site is contributed by histidine 237. The cysteines at positions 272 and 299 are disulfide-linked.

It belongs to the peptidase M43B family.

It is found in the secreted. In terms of biological role, secreted metalloproteinase that allows assimilation of proteinaceous substrates. Plays a pivotal role as a pathogenicity determinant during infections and contributes to the ability of the pathogen to persist within the mammalian host. The sequence is that of Extracellular metalloprotease AFUB_008060 from Aspergillus fumigatus (strain CBS 144.89 / FGSC A1163 / CEA10) (Neosartorya fumigata).